Here is a 600-residue protein sequence, read N- to C-terminus: MSCRAGKKLFQWSRVKSSTEEIVKQLTVPLREHAEPILTLTPEQKREAVRLKIQEIEHTKGQPPFFDMFMREHTYLRISLTEKCNFRCLYCMPAEGVPLKPKDKMLSNSEVLRLVKLFAAHGVDKVRLTGGEPTIRKDIVHIVEGISSTPGIKEVGITTNGLVLQRFLPQLRDAGLTKINISIDSLDREKFAKMTRRDGFDKVWKAIELARGYYPKVKLNVVVLKHQNENEVVDFVNLTKDRNLDVRFIEFMPFGGNEFKNDNFIGYREMLNLIVDKYGDGVIRLSDSPNDTTKAYKIDGFQGQFGFITSMSDHFCNTCNRLRITADGNLKVCLHGNSEVSLRDRIRCGDSDEQLSEVIQKAVNNKKARHAVFRNGRSEEPAKSSNDSYRGLTPVTSASSILVHLPSSSLYHSHLHSSRHFFISQIRCFSTTYSVSSITHLLTHVDNNGNAKQVDVSQKDTSTRTAVARGTIILTAEISRQISENTIKKGDVLTVAKIASILGAKQVANLIPLCHPIRLDFVDTVFNHDIENSKLHCISTARCSGNTGVEMEALTACTIALLTVYDMCKAISQKMMLTNIYLVHKSGGKTTYTIDNENQI.

Residues 4–371 (RAGKKLFQWS…AVNNKKARHA (368 aa)) are molybdenum cofactor biosynthesis protein A. A Radical SAM core domain is found at 68–284 (MFMREHTYLR…VDKYGDGVIR (217 aa)). GTP is bound at residue Arg77. The [4Fe-4S] cluster site is built by Cys84 and Cys88. Tyr90 contacts S-adenosyl-L-methionine. Cys91 serves as a coordination point for [4Fe-4S] cluster. Arg127 is a GTP binding site. Gly131 serves as a coordination point for S-adenosyl-L-methionine. Thr158 lines the GTP pocket. S-adenosyl-L-methionine is bound at residue Ser182. Position 218 (Lys218) interacts with GTP. Met252 contributes to the S-adenosyl-L-methionine binding site. Positions 316 and 319 each coordinate [4Fe-4S] cluster. 321–323 (RLR) provides a ligand contact to GTP. Cys333 is a binding site for [4Fe-4S] cluster. The tract at residues 369–390 (RHAVFRNGRSEEPAKSSNDSYR) is disordered. Residues 396-595 (TSASSILVHL…SGGKTTYTID (200 aa)) are molybdenum cofactor biosynthesis protein C. The For molybdenum cofactor biosynthesis protein C activity role is filled by Asp566.

The protein in the C-terminal section; belongs to the MoaC family. It in the N-terminal section; belongs to the radical SAM superfamily. MoaA family. In terms of assembly, isoform a and isoform b probably form a heterooligomer. [4Fe-4S] cluster serves as cofactor.

It catalyses the reaction GTP + AH2 + S-adenosyl-L-methionine = (8S)-3',8-cyclo-7,8-dihydroguanosine 5'-triphosphate + 5'-deoxyadenosine + L-methionine + A + H(+). The enzyme catalyses (8S)-3',8-cyclo-7,8-dihydroguanosine 5'-triphosphate = cyclic pyranopterin phosphate + diphosphate. Its pathway is cofactor biosynthesis; molybdopterin biosynthesis. In terms of biological role, probably forms a complex with isoform b that catalyzes the conversion of 5'-GTP to cyclic pyranopterin monophosphate (cPMP). Catalyzes the cyclization of GTP to (8S)-3',8-cyclo-7,8-dihydroguanosine 5'-triphosphate and mocs1b catalyzes the subsequent conversion of (8S)-3',8-cyclo-7,8-dihydroguanosine 5'-triphosphate to cPMP. Functionally, probably forms a complex with isoform a that catalyzes the conversion of 5'-GTP to cyclic pyranopterin monophosphate (cPMP). The protein is Molybdenum cofactor biosynthesis protein moc-5 of Caenorhabditis elegans.